We begin with the raw amino-acid sequence, 591 residues long: L-fucose isomerase (591 aa).

Catalysis depends on proton acceptor residues E337 and D361. The Mn(2+) site is built by E337, D361, and H528.

The protein belongs to the L-fucose isomerase family. Homohexamer. It depends on Mn(2+) as a cofactor.

Its subcellular location is the cytoplasm. The enzyme catalyses L-fucose = L-fuculose. It functions in the pathway carbohydrate degradation; L-fucose degradation; L-lactaldehyde and glycerone phosphate from L-fucose: step 1/3. Converts the aldose L-fucose into the corresponding ketose L-fuculose. This chain is L-fucose isomerase, found in Escherichia coli O139:H28 (strain E24377A / ETEC).